Reading from the N-terminus, the 124-residue chain is Urease subunit beta (124 aa).

It belongs to the urease beta subunit family. Heterotrimer of UreA (gamma), UreB (beta) and UreC (alpha) subunits. Three heterotrimers associate to form the active enzyme.

The protein resides in the cytoplasm. It catalyses the reaction urea + 2 H2O + H(+) = hydrogencarbonate + 2 NH4(+). The protein operates within nitrogen metabolism; urea degradation; CO(2) and NH(3) from urea (urease route): step 1/1. This Bacillus velezensis (strain DSM 23117 / BGSC 10A6 / LMG 26770 / FZB42) (Bacillus amyloliquefaciens subsp. plantarum) protein is Urease subunit beta.